Reading from the N-terminus, the 304-residue chain is Porphobilinogen deaminase (304 aa).

Cys240 is subject to S-(dipyrrolylmethanemethyl)cysteine.

The protein belongs to the HMBS family. Monomer. Dipyrromethane is required as a cofactor.

It catalyses the reaction 4 porphobilinogen + H2O = hydroxymethylbilane + 4 NH4(+). It functions in the pathway porphyrin-containing compound metabolism; protoporphyrin-IX biosynthesis; coproporphyrinogen-III from 5-aminolevulinate: step 2/4. Tetrapolymerization of the monopyrrole PBG into the hydroxymethylbilane pre-uroporphyrinogen in several discrete steps. This chain is Porphobilinogen deaminase, found in Xanthomonas campestris pv. campestris (strain ATCC 33913 / DSM 3586 / NCPPB 528 / LMG 568 / P 25).